Consider the following 281-residue polypeptide: LC-AMP precursor 3 (281 aa).

Positions 1–19 (MKYTIIPFLLLVALTCATA) are cleaved as a signal peptide. Positions 20-56 (RSIDGSEKEVQEIREETPSSNEDVPFSLSANEDEEAR) are excised as a propeptide. The residue at position 74 (leucine 74) is a Leucine amide. A propeptide spanning residues 75–89 (GREESLSANEDEEAR) is cleaved from the precursor. A Serine amide modification is found at serine 114. Positions 115 to 129 (GREESFSANEDEEER) are excised as a propeptide. Leucine 147 carries the post-translational modification Leucine amide. The propeptide occupies 148 to 162 (GREESISANEDEETR). Leucine 180 carries the leucine amide modification. A propeptide spanning residues 181 to 195 (GREESLSAIEDEEAR) is cleaved from the precursor. Leucine 213 is subject to Leucine amide. The propeptide occupies 214–228 (GREESLSANEDEEAR). Leucine 246 bears the Leucine amide mark. Residues 247–261 (GREESLSANEDEEAR) constitute a propeptide that is removed on maturation. A Leucine amide modification is found at leucine 279.

In terms of tissue distribution, expressed by the venom gland.

The protein resides in the secreted. Functionally, antimicrobial peptide that acts by influencing bacterial cell membrane permeability at low concentrations and by directly disrupting structure-function at high concentrations. Shows activity against Gram-negative bacteria (S.typhimurium CGMCC 1.1174 (MIC=2.5 uM), E.coli CCTCC AB 2018675 (MIC=5 uM), S.dysenteriae CGMCC 1.1869 (MIC=2.5 uM), P.aeruginosa CGMCC 1.596 (MIC 5-10 uM), K.pneumoniae (MIC=10 uM), A.baumannii (MIC=5-10 uM)), and Gram-positive bacteria (S.aureus CMCC 26003 or MRSA ATCC 43300 (MIC=5 uM), and E.faecium (MIC=2.5-5 uM)). Inhibits biofilm formation of E.coli and S.aureus in a dose-dependent manner and disrupts established biofilms. Demonstrates minimal bacterial resistance, excellent stability, negligible mammalian cell toxicity, low hemolytic activity, and appropriate selectivity for both normal and tumor cells. When combined with traditional antibiotics, exhibits additive or synergistic therapeutic effects. In vivo, in a neutropenic mouse thigh infection model, exhibits a therapeutic effect in inhibiting bacterial proliferation. In Lycosa coelestis (Wolf spider), this protein is LC-AMP precursor 3.